Reading from the N-terminus, the 226-residue chain is UPF0502 protein Gbem_0194 (226 aa).

It belongs to the UPF0502 family.

The sequence is that of UPF0502 protein Gbem_0194 from Citrifermentans bemidjiense (strain ATCC BAA-1014 / DSM 16622 / JCM 12645 / Bem) (Geobacter bemidjiensis).